We begin with the raw amino-acid sequence, 386 residues long: Phosphoglycerate kinase (386 aa).

Substrate contacts are provided by residues 21–23, R36, 59–62, R113, and R146; these read DLN and HLGR. Residues K197, E314, and 340–343 contribute to the ATP site; that span reads GGDT.

The protein belongs to the phosphoglycerate kinase family. As to quaternary structure, monomer.

It is found in the cytoplasm. It catalyses the reaction (2R)-3-phosphoglycerate + ATP = (2R)-3-phospho-glyceroyl phosphate + ADP. It functions in the pathway carbohydrate degradation; glycolysis; pyruvate from D-glyceraldehyde 3-phosphate: step 2/5. In Vibrio campbellii (strain ATCC BAA-1116), this protein is Phosphoglycerate kinase.